Reading from the N-terminus, the 243-residue chain is Tubulin-folding cofactor B (243 aa).

The 43-residue stretch at 181-223 (RAESLGPGYWVGIQYDEPLGKHDGMVKGTRFFECPRLQGGMVR) folds into the CAP-Gly domain.

Belongs to the TBCB family. In terms of assembly, supercomplex made of cofactors A to E. Cofactors A and D function by capturing and stabilizing tubulin in a quasi-native conformation. Cofactor E binds to the cofactor D-tubulin complex; interaction with cofactor C then causes the release of tubulin polypeptides that are committed to the native state. Interacts with TUBA6. As to expression, expressed in roots, stems, leaves, flowers and siliques.

The protein resides in the cytoplasm. Its function is as follows. Involved in control of cell division. Regulates probably the availability of alpha-tubulin for dimerization of alpha-/beta-tubulin, which is required for proper microtubule biogenesis. Decreased expression of TFCB results in enlarged mesophyll cells and leaf epidermal cells with bulged nuclei, increased ploidy and increased numbers of spindles and phragmoplasts. The chain is Tubulin-folding cofactor B (TFCB) from Arabidopsis thaliana (Mouse-ear cress).